Reading from the N-terminus, the 303-residue chain is Glycine--tRNA ligase alpha subunit (303 aa).

Belongs to the class-II aminoacyl-tRNA synthetase family. As to quaternary structure, tetramer of two alpha and two beta subunits.

It localises to the cytoplasm. It catalyses the reaction tRNA(Gly) + glycine + ATP = glycyl-tRNA(Gly) + AMP + diphosphate. In Salmonella agona (strain SL483), this protein is Glycine--tRNA ligase alpha subunit.